Here is a 214-residue protein sequence, read N- to C-terminus: Potassium/proton antiporter CemA (214 aa).

A run of 2 helical transmembrane segments spans residues 92–112 and 174–194; these read ILHL…SILG and IISG…KYWI.

The protein belongs to the CemA family.

The protein resides in the plastid. Its subcellular location is the chloroplast inner membrane. The catalysed reaction is K(+)(in) + H(+)(out) = K(+)(out) + H(+)(in). Functionally, contributes to K(+)/H(+) antiport activity by supporting proton efflux to control proton extrusion and homeostasis in chloroplasts in a light-dependent manner to modulate photosynthesis. Prevents excessive induction of non-photochemical quenching (NPQ) under continuous-light conditions. Indirectly promotes efficient inorganic carbon uptake into chloroplasts. This chain is Potassium/proton antiporter CemA, found in Oenothera argillicola (Appalachian evening primrose).